The sequence spans 166 residues: UPF0254 protein Mevan_0254 (166 aa).

It belongs to the UPF0254 family.

In Methanococcus vannielii (strain ATCC 35089 / DSM 1224 / JCM 13029 / OCM 148 / SB), this protein is UPF0254 protein Mevan_0254.